Consider the following 357-residue polypeptide: Cinnamyl alcohol dehydrogenase 5 (357 aa).

A Zn(2+)-binding site is contributed by Cys-47. An NADP(+)-binding site is contributed by Thr-49. His-69, Glu-70, Cys-100, Cys-103, Cys-106, Cys-114, and Cys-163 together coordinate Zn(2+). Residues Thr-167, 188-193 (GLGGVG), 211-216 (SSSNKK), Thr-251, Gly-275, and 298-300 (SFI) contribute to the NADP(+) site.

The protein belongs to the zinc-containing alcohol dehydrogenase family. In terms of assembly, homodimer. It depends on Zn(2+) as a cofactor. As to expression, expressed at the lateral root initiation sites, in the vascular tissues of the primary lateral root and the root caps. Expressed in the hypocotyl, cotyledon and leaf veins, apical meristem region, at the base of the trichomes, hydathodes and cauline leaves. In stems, expressed in the cells associated with the vascular cambium, interfascicular cambium and the developing xylem. Expressed in the vascular strand of petals and sepals, anthers, stamen filaments, stigma in flowers, and abscission, style and stigmatic regions of siliques.

The catalysed reaction is (E)-cinnamyl alcohol + NADP(+) = (E)-cinnamaldehyde + NADPH + H(+). It carries out the reaction (E)-coniferol + NADP(+) = (E)-coniferaldehyde + NADPH + H(+). The enzyme catalyses (E)-sinapyl alcohol + NADP(+) = (E)-sinapaldehyde + NADPH + H(+). It catalyses the reaction (E)-4-coumaroyl alcohol + NADP(+) = (E)-4-coumaraldehyde + NADPH + H(+). The catalysed reaction is (E)-caffeyl alcohol + NADP(+) = (E)-caffeyl aldehyde + NADPH + H(+). It functions in the pathway aromatic compound metabolism; phenylpropanoid biosynthesis. In terms of biological role, involved in lignin biosynthesis in the floral stem. Catalyzes the final step specific for the production of lignin monomers. Catalyzes the NADPH-dependent reduction of coniferaldehyde, 5-hydroxyconiferaldehyde, sinapaldehyde, 4-coumaraldehyde and caffeyl aldehyde to their respective alcohols. The polypeptide is Cinnamyl alcohol dehydrogenase 5 (Arabidopsis thaliana (Mouse-ear cress)).